An 865-amino-acid chain; its full sequence is Bifunctional uridylyltransferase/uridylyl-removing enzyme (865 aa).

The tract at residues 1–318 (MPHVDLNPLK…FPRPDSDARL (318 aa)) is uridylyltransferase. The interval 319 to 675 (IDDDFRNLRE…VRPTEHGEGL (357 aa)) is uridylyl-removing. The HD domain occupies 437–559 (VDQHTLAVVR…VGDERRLAAL (123 aa)). 2 ACT domains span residues 676 to 762 (QVMV…RLPH) and 789 to 865 (RLSV…QQAA). The interval 747–767 (DPHAARHAHAPRRLPHSHARR) is disordered. A compositionally biased stretch (basic residues) spans 751-767 (ARHAHAPRRLPHSHARR).

This sequence belongs to the GlnD family. It depends on Mg(2+) as a cofactor.

The enzyme catalyses [protein-PII]-L-tyrosine + UTP = [protein-PII]-uridylyl-L-tyrosine + diphosphate. The catalysed reaction is [protein-PII]-uridylyl-L-tyrosine + H2O = [protein-PII]-L-tyrosine + UMP + H(+). With respect to regulation, uridylyltransferase (UTase) activity is inhibited by glutamine, while glutamine activates uridylyl-removing (UR) activity. Its function is as follows. Modifies, by uridylylation and deuridylylation, the PII regulatory proteins (GlnB and homologs), in response to the nitrogen status of the cell that GlnD senses through the glutamine level. Under low glutamine levels, catalyzes the conversion of the PII proteins and UTP to PII-UMP and PPi, while under higher glutamine levels, GlnD hydrolyzes PII-UMP to PII and UMP (deuridylylation). Thus, controls uridylylation state and activity of the PII proteins, and plays an important role in the regulation of nitrogen assimilation and metabolism. This chain is Bifunctional uridylyltransferase/uridylyl-removing enzyme, found in Bordetella pertussis (strain Tohama I / ATCC BAA-589 / NCTC 13251).